A 702-amino-acid polypeptide reads, in one-letter code: Ribosomal RNA large subunit methyltransferase K/L (702 aa).

A THUMP domain is found at 43 to 154 (LVYQSLMWSR…KETASIALDL (112 aa)).

This sequence belongs to the methyltransferase superfamily. RlmKL family.

It is found in the cytoplasm. It carries out the reaction guanosine(2445) in 23S rRNA + S-adenosyl-L-methionine = N(2)-methylguanosine(2445) in 23S rRNA + S-adenosyl-L-homocysteine + H(+). The catalysed reaction is guanosine(2069) in 23S rRNA + S-adenosyl-L-methionine = N(2)-methylguanosine(2069) in 23S rRNA + S-adenosyl-L-homocysteine + H(+). Specifically methylates the guanine in position 2445 (m2G2445) and the guanine in position 2069 (m7G2069) of 23S rRNA. The sequence is that of Ribosomal RNA large subunit methyltransferase K/L from Shigella flexneri serotype 5b (strain 8401).